The chain runs to 393 residues: Interferon regulatory factor 9 (393 aa).

The segment at residues 9–116 (TRKLRNWVVE…EPYKVYQLLP (108 aa)) is a DNA-binding region (IRF tryptophan pentad repeat). Disordered regions lie at residues 120–151 (VSGQ…AMQN) and 163–202 (LNNE…APFQ). At Ser139 the chain carries Phosphoserine.

The protein belongs to the IRF family. As to quaternary structure, interacts with STAT2 in the cytoplasm. Forms the interferon-stimulated gene factor 3 complex (ISGF3) with the heterodimer STAT1:STAT2; upon stimulation. In terms of assembly, (Microbial infection) Interacts with measles virus V protein; this interaction prevents the binding of IRF9 to STAT2 and thereby the type I interferon signaling pathway. (Microbial infection) Ubiquitinated by Herpes simplex virus 2 E3 ubiquitin ligase ICP22.

The protein localises to the cytoplasm. It localises to the nucleus. Its function is as follows. Transcription factor that plays an essential role in anti-viral immunity. It mediates signaling by type I IFNs (IFN-alpha and IFN-beta). Following type I IFN binding to cell surface receptors, Jak kinases (TYK2 and JAK1) are activated, leading to tyrosine phosphorylation of STAT1 and STAT2. IRF9/ISGF3G associates with the phosphorylated STAT1:STAT2 dimer to form a complex termed ISGF3 transcription factor, that enters the nucleus. ISGF3 binds to the IFN stimulated response element (ISRE) to activate the transcription of interferon stimulated genes, which drive the cell in an antiviral state. The sequence is that of Interferon regulatory factor 9 (IRF9) from Homo sapiens (Human).